We begin with the raw amino-acid sequence, 233 residues long: NAD-dependent protein deacylase (233 aa).

The Deacetylase sirtuin-type domain occupies 1 to 230 (MKNIMILSGA…ALDIENFMKD (230 aa)). 9–28 (GAGLSAPSGLKTFRDNDGLW) contacts NAD(+). Substrate contacts are provided by tyrosine 53 and arginine 56. 88–91 (QNVD) serves as a coordination point for NAD(+). Catalysis depends on histidine 106, which acts as the Proton acceptor. Residues cysteine 114, cysteine 117, cysteine 133, and cysteine 136 each coordinate Zn(2+). NAD(+)-binding positions include 172-174 (GTS) and isoleucine 213.

This sequence belongs to the sirtuin family. Class III subfamily. The cofactor is Zn(2+).

The protein localises to the cytoplasm. The catalysed reaction is N(6)-acetyl-L-lysyl-[protein] + NAD(+) + H2O = 2''-O-acetyl-ADP-D-ribose + nicotinamide + L-lysyl-[protein]. The enzyme catalyses N(6)-succinyl-L-lysyl-[protein] + NAD(+) + H2O = 2''-O-succinyl-ADP-D-ribose + nicotinamide + L-lysyl-[protein]. NAD-dependent lysine deacetylase and desuccinylase that specifically removes acetyl and succinyl groups on target proteins. Modulates the activities of several proteins which are inactive in their acylated form. In Campylobacter jejuni (strain RM1221), this protein is NAD-dependent protein deacylase.